The chain runs to 300 residues: N-acetylmuramic acid 6-phosphate etherase (300 aa).

Residues 57–220 (IAVAFQSGGR…TTGAMIRTGK (164 aa)) enclose the SIS domain. The active-site Proton donor is Glu-85. Residue Glu-116 is part of the active site.

This sequence belongs to the GCKR-like family. MurNAc-6-P etherase subfamily. In terms of assembly, homodimer.

The catalysed reaction is N-acetyl-D-muramate 6-phosphate + H2O = N-acetyl-D-glucosamine 6-phosphate + (R)-lactate. It functions in the pathway amino-sugar metabolism; 1,6-anhydro-N-acetylmuramate degradation. The protein operates within amino-sugar metabolism; N-acetylmuramate degradation. It participates in cell wall biogenesis; peptidoglycan recycling. Its function is as follows. Specifically catalyzes the cleavage of the D-lactyl ether substituent of MurNAc 6-phosphate, producing GlcNAc 6-phosphate and D-lactate. Together with AnmK, is also required for the utilization of anhydro-N-acetylmuramic acid (anhMurNAc) either imported from the medium or derived from its own cell wall murein, and thus plays a role in cell wall recycling. This chain is N-acetylmuramic acid 6-phosphate etherase, found in Aliivibrio fischeri (strain ATCC 700601 / ES114) (Vibrio fischeri).